Consider the following 392-residue polypeptide: MAEQELRNYHLNFGPQHPAAHGVLRLVLELDGEVVERVDPHIGLLHRGTEKLIEYKTYLQATPYFDRLDYVAPMNQEHAFVLAAERLLGLEVPRRAQFIRVLYSEIGRILAHLLNVTTQAMDVGALTPPLWGFEEREKLMIFYERASGARLHANYFRTGGVHRDLPPKLLEDIYNFCDPCSQVLDDLEGLITDNRIFKQRNVDIGVVSQEEALEWGFSGVMVRGSGMAWDLRRAQPYEVYSELDFDIPVGKNGDCYDRYLCRMEEMRQSLRIMKQCIELMPGGPVHVLDGKVVPPSRSEMKRSMEALIHHFKLYTEGYHVPAGEVYAAVEAPKGEFGVYLVSDGGNKPYKCKIRAPGYAHLQAMDHLCKGHMLADVSAILGSIDIVFGEVDR.

The protein belongs to the complex I 49 kDa subunit family. As to quaternary structure, NDH-1 is composed of 14 different subunits. Subunits NuoB, C, D, E, F, and G constitute the peripheral sector of the complex.

The protein resides in the cell inner membrane. The enzyme catalyses a quinone + NADH + 5 H(+)(in) = a quinol + NAD(+) + 4 H(+)(out). Functionally, NDH-1 shuttles electrons from NADH, via FMN and iron-sulfur (Fe-S) centers, to quinones in the respiratory chain. The immediate electron acceptor for the enzyme in this species is believed to be ubiquinone. Couples the redox reaction to proton translocation (for every two electrons transferred, four hydrogen ions are translocated across the cytoplasmic membrane), and thus conserves the redox energy in a proton gradient. This is NADH-quinone oxidoreductase subunit D from Parvibaculum lavamentivorans (strain DS-1 / DSM 13023 / NCIMB 13966).